A 264-amino-acid polypeptide reads, in one-letter code: S-adenosylmethionine decarboxylase proenzyme (264 aa).

The active-site Schiff-base intermediate with substrate; via pyruvic acid is the S112. A Pyruvic acid (Ser); by autocatalysis modification is found at S112. H117 serves as the catalytic Proton acceptor; for processing activity. C140 serves as the catalytic Proton donor; for catalytic activity.

It belongs to the prokaryotic AdoMetDC family. Type 2 subfamily. In terms of assembly, heterooctamer of four alpha and four beta chains arranged as a tetramer of alpha/beta heterodimers. Pyruvate is required as a cofactor. Post-translationally, is synthesized initially as an inactive proenzyme. Formation of the active enzyme involves a self-maturation process in which the active site pyruvoyl group is generated from an internal serine residue via an autocatalytic post-translational modification. Two non-identical subunits are generated from the proenzyme in this reaction, and the pyruvate is formed at the N-terminus of the alpha chain, which is derived from the carboxyl end of the proenzyme. The post-translation cleavage follows an unusual pathway, termed non-hydrolytic serinolysis, in which the side chain hydroxyl group of the serine supplies its oxygen atom to form the C-terminus of the beta chain, while the remainder of the serine residue undergoes an oxidative deamination to produce ammonia and the pyruvoyl group blocking the N-terminus of the alpha chain.

The enzyme catalyses S-adenosyl-L-methionine + H(+) = S-adenosyl 3-(methylsulfanyl)propylamine + CO2. The protein operates within amine and polyamine biosynthesis; S-adenosylmethioninamine biosynthesis; S-adenosylmethioninamine from S-adenosyl-L-methionine: step 1/1. Its function is as follows. Catalyzes the decarboxylation of S-adenosylmethionine to S-adenosylmethioninamine (dcAdoMet), the propylamine donor required for the synthesis of the polyamines spermine and spermidine from the diamine putrescine. The sequence is that of S-adenosylmethionine decarboxylase proenzyme from Yersinia enterocolitica serotype O:8 / biotype 1B (strain NCTC 13174 / 8081).